A 482-amino-acid chain; its full sequence is Probable glycine dehydrogenase (decarboxylating) subunit 2 (482 aa).

Lys-267 bears the N6-(pyridoxal phosphate)lysine mark.

This sequence belongs to the GcvP family. C-terminal subunit subfamily. As to quaternary structure, the glycine cleavage system is composed of four proteins: P, T, L and H. In this organism, the P 'protein' is a heterodimer of two subunits. The cofactor is pyridoxal 5'-phosphate.

The catalysed reaction is N(6)-[(R)-lipoyl]-L-lysyl-[glycine-cleavage complex H protein] + glycine + H(+) = N(6)-[(R)-S(8)-aminomethyldihydrolipoyl]-L-lysyl-[glycine-cleavage complex H protein] + CO2. The glycine cleavage system catalyzes the degradation of glycine. The P protein binds the alpha-amino group of glycine through its pyridoxal phosphate cofactor; CO(2) is released and the remaining methylamine moiety is then transferred to the lipoamide cofactor of the H protein. In Aquifex aeolicus (strain VF5), this protein is Probable glycine dehydrogenase (decarboxylating) subunit 2.